Consider the following 241-residue polypeptide: Dolichol-phosphate mannosyltransferase subunit 1 (241 aa).

Positions 13, 15, 17, 44, 46, 99, 100, 101, 128, 215, and 221 each coordinate GDP-alpha-D-mannose. Mg(2+) is bound at residue aspartate 101. Aspartate 101 provides a ligand contact to Mn(2+).

It belongs to the glycosyltransferase 2 family. The cofactor is Mg(2+). Requires Mn(2+) as cofactor. It depends on Ca(2+) as a cofactor.

It is found in the endoplasmic reticulum. The enzyme catalyses a di-trans,poly-cis-dolichyl phosphate + GDP-alpha-D-mannose = a di-trans,poly-cis-dolichyl beta-D-mannosyl phosphate + GDP. It functions in the pathway protein modification; protein glycosylation. Transfers mannose from GDP-mannose to dolichol monophosphate to form dolichol phosphate mannose (Dol-P-Man) which is the mannosyl donor in pathways leading to N-glycosylation, glycosyl phosphatidylinositol membrane anchoring, and O-mannosylation of proteins. The protein is Dolichol-phosphate mannosyltransferase subunit 1 of Drosophila melanogaster (Fruit fly).